We begin with the raw amino-acid sequence, 375 residues long: Actin, cytoplasmic (375 aa).

Belongs to the actin family.

Its subcellular location is the cytoplasm. The protein resides in the cytoskeleton. It carries out the reaction ATP + H2O = ADP + phosphate + H(+). Functionally, actins are highly conserved proteins that are involved in various types of cell motility and are ubiquitously expressed in all eukaryotic cells. The chain is Actin, cytoplasmic from Oxytricha trifallax (Sterkiella histriomuscorum).